The following is a 311-amino-acid chain: Putative dihydroorotate dehydrogenase A (fumarate) (311 aa).

Residues Lys-45, 69–73, and Asn-128 contribute to the substrate site; that span reads NSMGL. Position 45–46 (45–46) interacts with FMN; sequence KT. Asn-128 is an FMN binding site. The active-site Nucleophile is Cys-131. Residues Lys-165 and Val-193 each coordinate FMN. Residue 194-195 coordinates substrate; it reads NS. Residues Gly-220, 248–249, and 270–271 each bind FMN; these read GG and GT.

The protein belongs to the dihydroorotate dehydrogenase family. Type 1 subfamily. As to quaternary structure, homodimer. It depends on FMN as a cofactor.

It is found in the cytoplasm. It carries out the reaction (S)-dihydroorotate + fumarate = orotate + succinate. Its pathway is pyrimidine metabolism; UMP biosynthesis via de novo pathway. In terms of biological role, catalyzes the conversion of dihydroorotate to orotate with fumarate as the electron acceptor. The protein is Putative dihydroorotate dehydrogenase A (fumarate) (pyrD) of Streptococcus pyogenes serotype M5 (strain Manfredo).